The sequence spans 1071 residues: DNA-directed RNA polymerase subunit beta (1071 aa).

The protein belongs to the RNA polymerase beta chain family. In terms of assembly, in plastids the minimal PEP RNA polymerase catalytic core is composed of four subunits: alpha, beta, beta', and beta''. When a (nuclear-encoded) sigma factor is associated with the core the holoenzyme is formed, which can initiate transcription.

The protein localises to the plastid. The protein resides in the chloroplast. It catalyses the reaction RNA(n) + a ribonucleoside 5'-triphosphate = RNA(n+1) + diphosphate. Functionally, DNA-dependent RNA polymerase catalyzes the transcription of DNA into RNA using the four ribonucleoside triphosphates as substrates. This Acorus calamus (Sweet flag) protein is DNA-directed RNA polymerase subunit beta.